A 249-amino-acid polypeptide reads, in one-letter code: Short-chain dehydrogenase virB (249 aa).

NADP(+) is bound by residues I16, R104, Y150, K154, V183, and T185. Y150 (proton donor) is an active-site residue. The active-site Lowers pKa of active site Tyr is the K154.

This sequence belongs to the short-chain dehydrogenases/reductases (SDR) family.

The protein operates within secondary metabolite biosynthesis. Its function is as follows. Short-chain dehydrogenase; part of the gene cluster that mediates the biosynthesis of virensols and trichoxide, fungal natural products that contain or are derived from a salicylaldehyde core. The pathway begins with the synthesis of the reduced chain in virensol C by the highly reducing polyketide synthase virA via condensation of one acetate and 8 malonate units. VirA has interesting programming rules since the first 2 ketides are fully reduced, the 3 following ketides undergo beta-dehydration, and the last 3 ketides are only reduced to beta-hydroxys to yield the trihydroxy portion. The production of aldehyde virensol C by virA alone is surprising, since virA does not contain a reductase (R) domain that is typically associated with reductive product release in HRPKS. The cupin-domain enzyme virC is involved in enhancing virA product turnover. The short-chain dehydrogenase virB then oxidizes the C-7 alcohol of virensol C to a ketone, yielding virensol D. Virensol D is further transformed to salicylaldehyde 5-deoxyaurocitrin by the short-chain dehydrogenase virD. VirD catalyzes the dehydrogenation of C-3 to form the beta-ketone aldehyde, which is followed by the generation of the nucleophilic C-2 that is required for the intramolecular aldol condensation between C-2 and C-7, itself followed by dehydration and aromatization which leads to salicylaldehyde 5-deoxyaurocitrin. While the dehydrogenation of virensol D is definitely catalyzed by virD, the aldol condensation and dehydration may be uncatalyzed or assisted by virD. The short chain dehydrogenase virG then converts salicylaldehyde 5-deoxyaurocitrin into virensol B which is further hydroxylated by the cytochrome P450 monooxygenase virE to yield the hydroquinone virensol A. VirI then may oxidize virensol A to form the quinone, while virH performs the epoxidation. Finally, the two remaining short-chain dehydrogenases, virK and virL, are probably responsible for reducing the ketones to the corresponding alcohols to furnish the epoxycyclohexanol structure in trichoxide. The chain is Short-chain dehydrogenase virB from Hypocrea virens (strain Gv29-8 / FGSC 10586) (Gliocladium virens).